The chain runs to 214 residues: UPF0502 protein Pput_3252 (214 aa).

It belongs to the UPF0502 family.

The chain is UPF0502 protein Pput_3252 from Pseudomonas putida (strain ATCC 700007 / DSM 6899 / JCM 31910 / BCRC 17059 / LMG 24140 / F1).